An 897-amino-acid chain; its full sequence is 3'-5' exonuclease DinG (897 aa).

The Exonuclease domain maps to 8–161 (VVDLETTGNQ…DEDAATTAKL (154 aa)). The region spanning 241–496 (SKAVDQLGLT…KAIDQLEKQR (256 aa)) is the Helicase ATP-binding domain. 276–283 (ASLGSGKS) provides a ligand contact to ATP. The DEAH box signature appears at 448 to 451 (DEAH). The Helicase C-terminal domain occupies 703–883 (NIDEYVASIV…NYRQKKGDIQ (181 aa)).

Belongs to the helicase family. DinG subfamily. Type 2 sub-subfamily.

In terms of biological role, 3'-5' exonuclease. This chain is 3'-5' exonuclease DinG, found in Staphylococcus aureus (strain bovine RF122 / ET3-1).